Consider the following 431-residue polypeptide: MLSQTNDAFFTRSLADSDPEIFGAIEKELGRQRHEIELIASENIVSRAVLEAQGSIMTNKYAEGYPGKRYYGGCQYVDIAEALAIERAKKLFGVNFANVQPNSGSQMNQAVFLALLQPGDTFMGLDLNSGGHLTHGSPVNMSGKWFNVVSYGVREDDHLLDMDEVARKAREQKPKLIIAGGTAYSRIWDWKRFREIADEVGAWLMVDMAHIAGLVAGGQHPSPFPHCHVATTTTHKSLRGPRGGMILTNDEEIAKKINSAVFPGLQGGPLMHVIAAKAVALGEALQPSFKDYAAQVVKNARTLAETLKANGLDIVSGGTDNHLMLVDLRKKNATGKRAEAALGRAYVTCNKNGIPFDPEKPFVTSGVRLGAPAGTTRGFKEAEFKEVGELIVEVLDGLKAANSDEGNAAVEAGVREKVIKLTDRFPMYGYM.

Residues Leu127 and 131-133 contribute to the (6S)-5,6,7,8-tetrahydrofolate site; that span reads GHL. At Lys236 the chain carries N6-(pyridoxal phosphate)lysine. Position 252 (Glu252) interacts with (6S)-5,6,7,8-tetrahydrofolate.

The protein belongs to the SHMT family. As to quaternary structure, homodimer. It depends on pyridoxal 5'-phosphate as a cofactor.

The protein resides in the cytoplasm. It catalyses the reaction (6R)-5,10-methylene-5,6,7,8-tetrahydrofolate + glycine + H2O = (6S)-5,6,7,8-tetrahydrofolate + L-serine. It functions in the pathway one-carbon metabolism; tetrahydrofolate interconversion. The protein operates within amino-acid biosynthesis; glycine biosynthesis; glycine from L-serine: step 1/1. Functionally, catalyzes the reversible interconversion of serine and glycine with tetrahydrofolate (THF) serving as the one-carbon carrier. This reaction serves as the major source of one-carbon groups required for the biosynthesis of purines, thymidylate, methionine, and other important biomolecules. Also exhibits THF-independent aldolase activity toward beta-hydroxyamino acids, producing glycine and aldehydes, via a retro-aldol mechanism. In Rhizobium meliloti (strain 1021) (Ensifer meliloti), this protein is Serine hydroxymethyltransferase 1.